A 160-amino-acid polypeptide reads, in one-letter code: Ribosomal RNA large subunit methyltransferase H (160 aa).

Leu-76 and Gly-108 together coordinate S-adenosyl-L-methionine.

It belongs to the RNA methyltransferase RlmH family. Homodimer.

The protein resides in the cytoplasm. It carries out the reaction pseudouridine(1915) in 23S rRNA + S-adenosyl-L-methionine = N(3)-methylpseudouridine(1915) in 23S rRNA + S-adenosyl-L-homocysteine + H(+). Functionally, specifically methylates the pseudouridine at position 1915 (m3Psi1915) in 23S rRNA. This is Ribosomal RNA large subunit methyltransferase H from Rhodopseudomonas palustris (strain BisB18).